We begin with the raw amino-acid sequence, 361 residues long: MSPECAQTTGPGPSRTPDQVNRTHFPFFSDVKGDHRLVLSVLETTVLGLIFVVSLLGNVCALVLVVRRRRRGATVSLVLNLFCADLLFTSAIPLVLVVRWTEAWLLGPVVCHLLFYVMTMSGSVTILTLAAVSLERMVCIVRLRRGLSGPGRRTQAALLAFIWGYSALAALPLCILFRVVPQRLPGGDQEIPICTLDWPNRIGEISWDVFFVTLNFLVPGLVIVISYSKILQITKASRKRLTLSLAYSESHQIRVSQQDYRLFRTLFLLMVSFFIMWSPIIITILLILIQNFRQDLVIWPSLFFWVVAFTFANSALNPILYNMSLFRSEWRKIFCCFFFPEKGAIFTETSIRRNDLSVIST.

The disordered stretch occupies residues 1-21; sequence MSPECAQTTGPGPSRTPDQVN. Over 1-45 the chain is Extracellular; the sequence is MSPECAQTTGPGPSRTPDQVNRTHFPFFSDVKGDHRLVLSVLETT. Asparagine 21 carries an N-linked (GlcNAc...) asparagine glycan. The helical transmembrane segment at 46–66 threads the bilayer; it reads VLGLIFVVSLLGNVCALVLVV. Topologically, residues 67-77 are cytoplasmic; sequence RRRRRGATVSL. A helical membrane pass occupies residues 78–98; it reads VLNLFCADLLFTSAIPLVLVV. At 99 to 103 the chain is on the extracellular side; that stretch reads RWTEA. Residues 104-124 traverse the membrane as a helical segment; that stretch reads WLLGPVVCHLLFYVMTMSGSV. Cysteine 111 and cysteine 194 form a disulfide bridge. Over 125 to 156 the chain is Cytoplasmic; it reads TILTLAAVSLERMVCIVRLRRGLSGPGRRTQA. A helical membrane pass occupies residues 157–177; the sequence is ALLAFIWGYSALAALPLCILF. The Extracellular portion of the chain corresponds to 178–204; that stretch reads RVVPQRLPGGDQEIPICTLDWPNRIGE. A helical transmembrane segment spans residues 205-225; that stretch reads ISWDVFFVTLNFLVPGLVIVI. The Cytoplasmic portion of the chain corresponds to 226-268; sequence SYSKILQITKASRKRLTLSLAYSESHQIRVSQQDYRLFRTLFL. The chain crosses the membrane as a helical span at residues 269–289; the sequence is LMVSFFIMWSPIIITILLILI. At 290 to 295 the chain is on the extracellular side; the sequence is QNFRQD. A helical transmembrane segment spans residues 296–316; the sequence is LVIWPSLFFWVVAFTFANSAL. Topologically, residues 317–361 are cytoplasmic; it reads NPILYNMSLFRSEWRKIFCCFFFPEKGAIFTETSIRRNDLSVIST. Threonine 347 and threonine 349 each carry phosphothreonine. Residues serine 350, serine 357, and serine 360 each carry the phosphoserine modification.

Belongs to the G-protein coupled receptor 1 family. Interacts (via C-terminus) with ARRB2 following LCFAs stimulation. In terms of processing, phosphorylated at two clusters of Ser and Thr residues located in the intracellular C-terminus. Prerequisite for FFAR4 internalization via an ARRB2-dependent pathway.

The protein localises to the cell membrane. It is found in the endosome membrane. It localises to the lysosome membrane. The protein resides in the cell projection. Its subcellular location is the cilium membrane. Its function is as follows. G-protein-coupled receptor for long-chain fatty acids (LCFAs) with a major role in adipogenesis, energy metabolism and inflammation. Signals via G-protein and beta-arrestin pathways. LCFAs sensing initiates activation of phosphoinositidase C-linked G proteins GNAQ and GNA11 (G(q)/G(11)), inducing a variety of cellular responses via second messenger pathways such as intracellular calcium mobilization, modulation of cyclic adenosine monophosphate (cAMP) production, and mitogen-activated protein kinases (MAPKs). After LCFAs binding, associates with beta-arrestin ARRB2 that acts as an adapter protein coupling the receptor to specific downstream signaling pathways, as well as mediating receptor endocytosis. In response to dietary fats, plays an important role in the regulation of adipocyte proliferation and differentiation. Acts as a receptor for omega-3 polyunsaturated fatty acids (PUFAs) at primary cilium of perivascular preadipocytes, initiating an adipogenic program via cAMP and CTCF-dependent chromatin remodeling that ultimately results in transcriptional activation of adipogenic genes and cell cycle entry. Induces differentiation of brown and beige adipocytes probably via autocrine and endocrine functions of FGF21 hormone. Contributes to the thermogenic activation of brown adipose tissue and the browning of white adipose tissue. Activates brown adipocytes by initiating intracellular calcium signaling leading to mitochondrial depolarization and fission, and overall increased mitochondrial respiration. Consequently stimulates fatty acid uptake and oxidation in mitochondria together with UCP1-mediated thermogenic respiration, eventually reducing fat mass. Regulates bi-potential differentiation of bone marrow mesenchymal stem cells toward osteoblasts or adipocytes likely by up-regulating distinct integrins. In response to dietary fats regulates hormone secretion and appetite. Stimulates GIP and GLP1 secretion from enteroendocrine cells as well as GCG secretion in pancreatic alpha cells, thereby playing a role in the regulation of blood glucose levels. Negatively regulates glucose-induced SST secretion in pancreatic delta cells. Mediates LCFAs inhibition of GHRL secretion, an appetite-controlling hormone. In taste buds, contributes to sensing of dietary fatty acids by the gustatory system. During the inflammatory response, promotes anti-inflammatory M2 macrophage differentiation in adipose tissue. Mediates the anti-inflammatory effects of omega-3 PUFAs via inhibition of NLRP3 inflammasome activation. In this pathway, interacts with adapter protein ARRB2 and inhibits the priming step triggered by Toll-like receptors (TLRs) at the level of TAK1 and TAB1. Further inhibits the activation step when ARRB2 directly associates with NLRP3, leading to inhibition of pro-inflammatory cytokine release. Mediates LCFAs anti-apoptotic effects. The polypeptide is Free fatty acid receptor 4 (Ffar4) (Rattus norvegicus (Rat)).